We begin with the raw amino-acid sequence, 277 residues long: SF-assemblin (277 aa).

Residues 1-20 (MATSGMVSPTSGRPFSPMRS) form a disordered region. A nonhelical region region spans residues 1 to 27 (MATSGMVSPTSGRPFSPMRSSVLTTTG). Positions 28–277 (SAIKLEHVSE…KMVNMQHNSA (250 aa)) are rod. The stretch at 70-90 (RLEKSMEAEVKRRAESDKQLQ) forms a coiled coil.

Belongs to the SF-assemblin family. In terms of processing, the N-terminus is blocked.

The protein resides in the cytoplasm. It localises to the cytoskeleton. Functionally, major component of the striated microtubule-associated fibers (SMAFs; system-I-fibers). The sequence is that of SF-assemblin from Dunaliella bioculata (Green alga).